Consider the following 416-residue polypeptide: Exodeoxyribonuclease 7 large subunit (416 aa).

Belongs to the XseA family. Heterooligomer composed of large and small subunits.

It is found in the cytoplasm. It carries out the reaction Exonucleolytic cleavage in either 5'- to 3'- or 3'- to 5'-direction to yield nucleoside 5'-phosphates.. Its function is as follows. Bidirectionally degrades single-stranded DNA into large acid-insoluble oligonucleotides, which are then degraded further into small acid-soluble oligonucleotides. This Sulfurimonas denitrificans (strain ATCC 33889 / DSM 1251) (Thiomicrospira denitrificans (strain ATCC 33889 / DSM 1251)) protein is Exodeoxyribonuclease 7 large subunit.